Consider the following 426-residue polypeptide: MSKSENLYSAARELIPGGVNSPVRAFTGVGGTPLFIEKADGAWLYDVDGKAYIDYVGSWGPMVLGHNHPAIRNAVIEAAERGLSFGAPTEMEVKMAELVTSLVPTMDMVRMVNSGTEATMSAIRLARGFTGRDKIIKFEGCYHGHADCLLVKAGSGALTLGQPNSPGVPADFAKHTLTCVYNDLASVRAAFEQYPQEIACIIVEPVAGNMNCVLPLPEFLPGLRALCDEFGALLIIDEVMTGFRVALAGAQDYYGVVPDLTCLGKIIGGGMPVGAFGGRRDVMDALAPTGPVYQAGTLSGNPIAMAAGFACLNEVAQPGIHETLNKLTTRLAEGLREAAQEAGIPLVVNHVGGMFGIFFTDAGSVTCYQDVMACDVERFKRFFHLMLDEGVYLAPSAFEAGFMSVAHSMDDINNTIDAARRVFAKL.

Lysine 265 is modified (N6-(pyridoxal phosphate)lysine).

It belongs to the class-III pyridoxal-phosphate-dependent aminotransferase family. HemL subfamily. In terms of assembly, homodimer. Pyridoxal 5'-phosphate is required as a cofactor.

It localises to the cytoplasm. The enzyme catalyses (S)-4-amino-5-oxopentanoate = 5-aminolevulinate. It participates in porphyrin-containing compound metabolism; protoporphyrin-IX biosynthesis; 5-aminolevulinate from L-glutamyl-tRNA(Glu): step 2/2. The protein is Glutamate-1-semialdehyde 2,1-aminomutase of Salmonella arizonae (strain ATCC BAA-731 / CDC346-86 / RSK2980).